A 231-amino-acid polypeptide reads, in one-letter code: RING finger protein 141 (231 aa).

The N-myristoyl glycine moiety is linked to residue Gly-2. Residues 156–193 form an RING-type zinc finger; the sequence is CCICMDGRADLILPCAHSFCQKCIDKWSDRHRNCPICR.

The protein resides in the membrane. May be involved in spermatogenesis. This is RING finger protein 141 (RNF141) from Canis lupus familiaris (Dog).